The primary structure comprises 163 residues: Phosphopantetheine adenylyltransferase (163 aa).

Ser-10 contacts substrate. ATP is bound by residues 10–11 (SF) and His-18. Substrate contacts are provided by Lys-42, Leu-74, and Arg-88. ATP is bound by residues 89 to 91 (GLR), Glu-99, and 124 to 130 (YSFLSSS).

The protein belongs to the bacterial CoaD family. In terms of assembly, homohexamer. Mg(2+) serves as cofactor.

The protein localises to the cytoplasm. The catalysed reaction is (R)-4'-phosphopantetheine + ATP + H(+) = 3'-dephospho-CoA + diphosphate. It functions in the pathway cofactor biosynthesis; coenzyme A biosynthesis; CoA from (R)-pantothenate: step 4/5. Its function is as follows. Reversibly transfers an adenylyl group from ATP to 4'-phosphopantetheine, yielding dephospho-CoA (dPCoA) and pyrophosphate. The sequence is that of Phosphopantetheine adenylyltransferase from Bacillus cereus (strain G9842).